A 129-amino-acid chain; its full sequence is UPF0325 protein SG1947 (129 aa).

The protein belongs to the UPF0325 family.

The polypeptide is UPF0325 protein SG1947 (Sodalis glossinidius (strain morsitans)).